A 218-amino-acid chain; its full sequence is Ribose-5-phosphate isomerase A (218 aa).

Substrate contacts are provided by residues 28–31 (TGST), 81–84 (DGAD), and 94–97 (KGGG). Glu103 serves as the catalytic Proton acceptor. Lys121 lines the substrate pocket.

This sequence belongs to the ribose 5-phosphate isomerase family. Homodimer.

The catalysed reaction is aldehydo-D-ribose 5-phosphate = D-ribulose 5-phosphate. It functions in the pathway carbohydrate degradation; pentose phosphate pathway; D-ribose 5-phosphate from D-ribulose 5-phosphate (non-oxidative stage): step 1/1. Catalyzes the reversible conversion of ribose-5-phosphate to ribulose 5-phosphate. This chain is Ribose-5-phosphate isomerase A, found in Proteus mirabilis (strain HI4320).